A 198-amino-acid polypeptide reads, in one-letter code: Glycerol-3-phosphate acyltransferase (198 aa).

The next 5 membrane-spanning stretches (helical) occupy residues 1-21, 77-97, 111-131, 136-156, and 157-177; these read MTII…GFLF, HLFE…PIWL, MFIA…LIIL, IVSL…FLDI, and GVTN…VILK.

The protein belongs to the PlsY family. Probably interacts with PlsX.

It localises to the cell inner membrane. It carries out the reaction an acyl phosphate + sn-glycerol 3-phosphate = a 1-acyl-sn-glycero-3-phosphate + phosphate. The protein operates within lipid metabolism; phospholipid metabolism. Catalyzes the transfer of an acyl group from acyl-phosphate (acyl-PO(4)) to glycerol-3-phosphate (G3P) to form lysophosphatidic acid (LPA). This enzyme utilizes acyl-phosphate as fatty acyl donor, but not acyl-CoA or acyl-ACP. This chain is Glycerol-3-phosphate acyltransferase, found in Prochlorococcus marinus (strain MIT 9515).